Reading from the N-terminus, the 371-residue chain is Probable beta-1,3-galactosyltransferase 12 (371 aa).

The disordered stretch occupies residues 1 to 36 (MPLFSHRFTTASSSSPASPSYYNKPSSKTHKPNSSS). Positions 11-36 (ASSSSPASPSYYNKPSSKTHKPNSSS) are enriched in low complexity. A helical; Signal-anchor for type II membrane protein membrane pass occupies residues 46–66 (VAIIFFSLVSVFIGVAGTIFA). A glycan (N-linked (GlcNAc...) asparagine) is linked at Asn291.

It belongs to the glycosyltransferase 31 family. Requires Mn(2+) as cofactor.

The protein resides in the golgi apparatus membrane. It participates in protein modification; protein glycosylation. Functionally, beta-1,3-galactosyltransferase that transfers galactose from UDP-galactose to substrates with a terminal glycosyl residue. The chain is Probable beta-1,3-galactosyltransferase 12 (B3GALT12) from Arabidopsis thaliana (Mouse-ear cress).